Consider the following 644-residue polypeptide: Exoribonuclease 2 (644 aa).

Positions 189-516 constitute an RNB domain; sequence REDLTALNFV…NHRLLKAIIA (328 aa). The S1 motif domain maps to 561–643; the sequence is DERFNAEIID…ETRSVIARPA (83 aa).

It belongs to the RNR ribonuclease family. RNase II subfamily.

The protein localises to the cytoplasm. The enzyme catalyses Exonucleolytic cleavage in the 3'- to 5'-direction to yield nucleoside 5'-phosphates.. Its function is as follows. Involved in mRNA degradation. Hydrolyzes single-stranded polyribonucleotides processively in the 3' to 5' direction. The polypeptide is Exoribonuclease 2 (Serratia proteamaculans (strain 568)).